The sequence spans 293 residues: ATP phosphoribosyltransferase (293 aa).

This sequence belongs to the ATP phosphoribosyltransferase family. Long subfamily. Requires Mg(2+) as cofactor.

The protein resides in the cytoplasm. The enzyme catalyses 1-(5-phospho-beta-D-ribosyl)-ATP + diphosphate = 5-phospho-alpha-D-ribose 1-diphosphate + ATP. It participates in amino-acid biosynthesis; L-histidine biosynthesis; L-histidine from 5-phospho-alpha-D-ribose 1-diphosphate: step 1/9. Feedback inhibited by histidine. Functionally, catalyzes the condensation of ATP and 5-phosphoribose 1-diphosphate to form N'-(5'-phosphoribosyl)-ATP (PR-ATP). Has a crucial role in the pathway because the rate of histidine biosynthesis seems to be controlled primarily by regulation of HisG enzymatic activity. This Nitratidesulfovibrio vulgaris (strain ATCC 29579 / DSM 644 / CCUG 34227 / NCIMB 8303 / VKM B-1760 / Hildenborough) (Desulfovibrio vulgaris) protein is ATP phosphoribosyltransferase.